The sequence spans 76 residues: uncharacterized protein (76 aa).

This is an uncharacterized protein from Acidianus bottle-shaped virus (isolate Italy/Pozzuoli) (ABV).